The following is a 444-amino-acid chain: MDEFQRNSNKHRSWQQFFLYPLFFREDLXAIAHYHHLDRSGSSEPTEILVSNFLSFLTVKRSXRRIRKQNNSISLLGNSDSNKLIEYNKNSSFQLILEGFTIVLEALFAMRSKXFXKGMDGWNSFRSIHCIFPFMEAKLPHSBYISDLRVPYSIHPEILVRIFRRWIRDVPSLHLLRSILHEWKKSFNRENLQKALITQRENTRFSLFLWNSYVYECESFLIPLIKRILNSQSLLYGSFPDRTHFEKKIKDIVLFPPHKISPKKIWLLKDSFIHYVRYGERSLIALKGTHLQVKKCRYHLFHFWQYYFHLWFQPYRICSLELSKTSFSFLGFFMHVKMRPLVVRAKMLDDLFITDLITNELNSTAPIRSILFSLAKEKFCDISGWPISKLSWTSLSDDDIXDRFDRIWXXLFHYYSGSINQDGLYHIKYILLLSCAKTLACKHK.

Belongs to the intron maturase 2 family. MatK subfamily.

Its subcellular location is the plastid. It localises to the chloroplast. Its function is as follows. Usually encoded in the trnK tRNA gene intron. Probably assists in splicing its own and other chloroplast group II introns. The sequence is that of Maturase K from Chamaecyparis lawsoniana (Lawson false cypress).